Reading from the N-terminus, the 350-residue chain is Anthranilate phosphoribosyltransferase (350 aa).

Residues glycine 94, 97 to 98 (GS), threonine 102, 104 to 107 (NVST), 122 to 130 (KHGNRSVSS), and serine 134 each bind 5-phospho-alpha-D-ribose 1-diphosphate. Glycine 94 lines the anthranilate pocket. Residue serine 106 participates in Mg(2+) binding. Asparagine 125 serves as a coordination point for anthranilate. Arginine 180 contacts anthranilate. Mg(2+)-binding residues include aspartate 239 and glutamate 240.

This sequence belongs to the anthranilate phosphoribosyltransferase family. In terms of assembly, homodimer. The cofactor is Mg(2+).

The catalysed reaction is N-(5-phospho-beta-D-ribosyl)anthranilate + diphosphate = 5-phospho-alpha-D-ribose 1-diphosphate + anthranilate. It participates in amino-acid biosynthesis; L-tryptophan biosynthesis; L-tryptophan from chorismate: step 2/5. In terms of biological role, catalyzes the transfer of the phosphoribosyl group of 5-phosphorylribose-1-pyrophosphate (PRPP) to anthranilate to yield N-(5'-phosphoribosyl)-anthranilate (PRA). This chain is Anthranilate phosphoribosyltransferase, found in Geotalea uraniireducens (strain Rf4) (Geobacter uraniireducens).